The primary structure comprises 182 residues: UPF0397 protein BCAH187_A2708 (182 aa).

5 helical membrane-spanning segments follow: residues 9–29 (VVAIGIGAALYGILGLWGFSI), 40–60 (AILTVFGALFGPVAGLLIGLI), 71–91 (WGIWWGWVISSGIIGFAMGFI), 114–134 (ITGLIGIVIAIIFAGAFDIIV), and 142–162 (IVIQVLGATIADVIVFLVLGL).

This sequence belongs to the UPF0397 family.

Its subcellular location is the cell membrane. The chain is UPF0397 protein BCAH187_A2708 from Bacillus cereus (strain AH187).